A 295-amino-acid polypeptide reads, in one-letter code: Probable lipid kinase YegS-like (295 aa).

One can recognise a DAGKc domain in the interval 1 to 129 (MQGRKAMLVL…IDLGQAGDQL (129 aa)). ATP contacts are provided by residues Thr39, 65–71 (GDGTLRD), and Thr92. Positions 210, 213, and 215 each coordinate Mg(2+). Catalysis depends on Glu264, which acts as the Proton acceptor.

The protein belongs to the diacylglycerol/lipid kinase family. YegS lipid kinase subfamily. Mg(2+) is required as a cofactor. It depends on Ca(2+) as a cofactor.

It localises to the cytoplasm. Functionally, probably phosphorylates lipids; the in vivo substrate is unknown. The chain is Probable lipid kinase YegS-like from Pseudomonas putida (strain ATCC 47054 / DSM 6125 / CFBP 8728 / NCIMB 11950 / KT2440).